A 118-amino-acid polypeptide reads, in one-letter code: Large ribosomal subunit protein uL22c (118 aa).

The protein belongs to the universal ribosomal protein uL22 family. In terms of assembly, part of the 50S ribosomal subunit.

Its subcellular location is the plastid. It is found in the chloroplast. In terms of biological role, this protein binds specifically to 23S rRNA. The globular domain of the protein is located near the polypeptide exit tunnel on the outside of the subunit, while an extended beta-hairpin is found that lines the wall of the exit tunnel in the center of the 70S ribosome. The polypeptide is Large ribosomal subunit protein uL22c (rpl22) (Rhodomonas salina (Cryptomonas salina)).